The sequence spans 429 residues: Z-DNA-binding protein 1 (429 aa).

Z-binding domains follow at residues 8-70 and 103-166; these read PGRE…CLGG and PQFS…TIYR. The interval 68 to 107 is disordered; it reads LGGTDPEGEGPAELALSSPAERPQQHAATIPETPGPQFSQ. 2 short sequence motifs (RIP homotypic interaction motif (RHIM)) span residues 195–219 and 253–277; these read NSWI…RQTV and DIHM…LHGV. 2 disordered regions span residues 277 to 299 and 339 to 429; these read VPSE…AAGP and KMSI…GGGI. The segment covering 347 to 358 has biased composition (gly residues); the sequence is AGPGGVAGSGEG. Positions 407–420 are enriched in basic and acidic residues; it reads KAAEGSHYVDEASH.

Homodimer. Interacts (via RIP homotypic interaction motif) with RIPK3; leading to RIPK3 activation and necroptosis; interaction is enhanced by CASP6. Interacts (via RIP homotypic interaction motif) with RIPK1. Component of the AIM2 PANoptosome complex, a multiprotein complex that drives inflammatory cell death (PANoptosis). As to quaternary structure, (Microbial infection) Interacts (via RIP homotypic interaction motif/RHIM) with herpes simplex virus 1/HHV-1 protein RIR1/ICP6 (via RHIM); this interaction may induce heteromeric amyloid assemblies and prevent necroptosis activation. Interacts with human herpes simplex virus 1/HHV-1 protein ICP0. Phosphorylated. Highly expressed in lymphatic tissues including lymph node, leukocytes, tonsil, bone marrow and spleen. Expressed to a lesser extent in thymus, lung and liver.

The protein localises to the cytoplasm. The protein resides in the nucleus. With respect to regulation, ZBP1-dependent necroptosis is normally inhibited by RIPK1: RIPK1 inhibits the ZBP1-induced activation of RIPK3 via FADD-mediated recruitment of CASP8, which cleaves RIPK1 and limits TNF-induced necroptosis. Functionally, key innate sensor that recognizes and binds Z-RNA structures, which are produced by a number of viruses, such as herpesvirus, orthomyxovirus or flavivirus, and triggers different forms of cell death. ZBP1 acts as an essential mediator of pyroptosis, necroptosis and apoptosis (PANoptosis), an integral part of host defense against pathogens, by activating RIPK3, caspase-8 (CASP8), and the NLRP3 inflammasome. Key activator of necroptosis, a programmed cell death process in response to death-inducing TNF-alpha family members, via its ability to bind Z-RNA: once activated upon Z-RNA-binding, ZBP1 interacts and stimulates RIPK3 kinase, which phosphorylates and activates MLKL, triggering execution of programmed necrosis. In addition to TNF-induced necroptosis, necroptosis can also take place in the nucleus in response to orthomyxoviruses infection: ZBP1 recognizes and binds Z-RNA structures that are produced in infected nuclei by orthomyxoviruses, such as the influenza A virus (IAV), leading to ZBP1 activation, RIPK3 stimulation and subsequent MLKL phosphorylation, triggering disruption of the nuclear envelope and leakage of cellular DNA into the cytosol. ZBP1-dependent cell death in response to IAV infection promotes interleukin-1 alpha (IL1A) induction in an NLRP3-inflammasome-independent manner: IL1A expression is required for the optimal interleukin-1 beta (IL1B) production, and together, these cytokines promote infiltration of inflammatory neutrophils to the lung, leading to the formation of neutrophil extracellular traps. In addition to its direct role in driving necroptosis via its ability to sense Z-RNAs, also involved in PANoptosis triggered in response to bacterial infection: component of the AIM2 PANoptosome complex, a multiprotein complex that triggers PANoptosis. Also acts as the apical sensor of fungal infection responsible for activating PANoptosis. Involved in CASP8-mediated cell death via its interaction with RIPK1 but independently of its ability to sense Z-RNAs. In some cell types, also able to restrict viral replication by promoting cell death-independent responses. In response to Zika virus infection in neurons, promotes a cell death-independent pathway that restricts viral replication: together with RIPK3, promotes a death-independent transcriptional program that modifies the cellular metabolism via up-regulation expression of the enzyme ACOD1/IRG1 and production of the metabolite itaconate. Itaconate inhibits the activity of succinate dehydrogenase, generating a metabolic state in neurons that suppresses replication of viral genomes. Its function is as follows. (Microbial infection) In case of herpes simplex virus 1/HHV-1 infection, forms hetero-amyloid structures with HHV-1 protein RIR1/ICP6 which may inhibit ZBP1-mediated necroptosis, thereby preventing host cell death pathway and allowing viral evasion. This Homo sapiens (Human) protein is Z-DNA-binding protein 1.